Here is a 228-residue protein sequence, read N- to C-terminus: Core-capsid bridging protein (228 aa).

The tract at residues alanine 146–serine 177 is disordered. Residues proline 155–arginine 167 show a composition bias toward basic residues. Low complexity predominate over residues proline 168 to serine 177.

This sequence belongs to the adenoviridae core-capsid bridging protein family. In terms of assembly, monomer. Homodimer. Exists in equilibrium between monomers and dimers in solution. Interacts with the histone-like nucleoprotein; this interactions bridge the virus core to the capsid. Interacts with core protein X; this interactions bridge the virus core to the capsid. Interacts with the endosome lysis protein VI; this interactions bridge the virus core to the capsid. Interacts with the peripentonal hexons. Interacts with host NPM1; this interaction might play a role in virus assembly.

The protein localises to the virion. Its subcellular location is the host nucleus. It localises to the host nucleolus. Functionally, associates loosely with the viral DNA to form an outer shell around the nucleoprotein-DNA complex and links it with the capsid by binding the endosome lysis protein. Dissociates from the viral genome during entry. Might be involved in nuclear capsid assembly of the viral particles through its association with NPM1/nucleophosmin. The sequence is that of Core-capsid bridging protein from Murine adenovirus A serotype 1 (MAdV-1).